A 503-amino-acid chain; its full sequence is Maturase K (503 aa).

Belongs to the intron maturase 2 family. MatK subfamily.

It is found in the plastid. The protein localises to the chloroplast. Its function is as follows. Usually encoded in the trnK tRNA gene intron. Probably assists in splicing its own and other chloroplast group II introns. This chain is Maturase K, found in Panax quinquefolius (American ginseng).